Consider the following 387-residue polypeptide: Protein disulfide isomerase pTAC5, chloroplastic (387 aa).

The N-terminal 40 residues, 1–40, are a transit peptide targeting the chloroplast; it reads MASSSLPLSLPFPLRSLTSTTRSLPFQCSPLFFSIPSSIV. Coiled-coil stretches lie at residues 72-106 and 143-163; these read EQRW…LGNS and REQI…AEEK. Residues 318–387 form a CR-type zinc finger; the sequence is PVDRSESTNT…CDVCDGKKNL (70 aa).

As to quaternary structure, interacts with HSP21; the formed complex associates with the plastid-encoded RNA polymerase (PEP) complex not only during transcription initiation, but also during elongation and termination, and with a stronger efficiency in illuminated chloroplasts. Binds to promoter regions of PEP-dependent genes, especially after a heat stress. Interacts with FLN2.

The protein resides in the plastid. Its subcellular location is the chloroplast stroma. It localises to the chloroplast nucleoid. The enzyme catalyses Catalyzes the rearrangement of -S-S- bonds in proteins.. In terms of biological role, exhibits zinc-dependent disulfide isomerase activity. Required for seedling and chloroplast development under heat stress, probably by maintaining plastid-encoded RNA polymerase (PEP)-dependent transcription. In Arabidopsis thaliana (Mouse-ear cress), this protein is Protein disulfide isomerase pTAC5, chloroplastic.